The primary structure comprises 151 residues: Ubiquitin-conjugating enzyme E2 2 (151 aa).

Positions 4–150 constitute a UBC core domain; sequence AARRRLMRDF…VRETVEKSWE (147 aa). Catalysis depends on Cys-88, which acts as the Glycyl thioester intermediate.

The protein belongs to the ubiquitin-conjugating enzyme family.

The protein localises to the cytoplasm. It is found in the nucleus. It catalyses the reaction S-ubiquitinyl-[E1 ubiquitin-activating enzyme]-L-cysteine + [E2 ubiquitin-conjugating enzyme]-L-cysteine = [E1 ubiquitin-activating enzyme]-L-cysteine + S-ubiquitinyl-[E2 ubiquitin-conjugating enzyme]-L-cysteine.. It participates in protein modification; protein ubiquitination. Its function is as follows. Catalyzes the covalent attachment of ubiquitin to other proteins. Plays a role in transcription regulation by catalyzing the monoubiquitination of histone H2B to form H2BK123ub1. H2BK123ub1 gives a specific tag for epigenetic transcriptional activation and is also a prerequisite for H3K4me and H3K79me formation. Also involved in postreplication repair of UV-damaged DNA, in N-end rule-dependent protein degradation and in sporulation. The protein is Ubiquitin-conjugating enzyme E2 2 (UBC2) of Fusarium solani (Filamentous fungus).